The sequence spans 92 residues: uncharacterized protein (92 aa).

The protein to M.jannaschii MJ0782.1.

This is an uncharacterized protein from Methanothermobacter thermautotrophicus (strain ATCC 29096 / DSM 1053 / JCM 10044 / NBRC 100330 / Delta H) (Methanobacterium thermoautotrophicum).